A 317-amino-acid polypeptide reads, in one-letter code: MKIKLANPRGFCAGVDRAIEIVNRALDVFGAPIYVRHEVVHNRFVVEGLRTRGAVFVDELDEVPDGALVIFSAHGVSQEVRQEADARGLKVFDATCPLVTKVHMEVMRYSRDGRECILIGHAGHPEVEGTMGQYDSANGGAIYLVEDEEDVGRLIVNDPGNLAYVTQTTLSVDDTARVIDALRQTFPEIKGPRKDDICYATQNRQDAVKELAATCDVVLVVGSVNSSNSNRLRELAERMQTPAYLIDGAHEIQPDWFAGAASVGVTAGASAPEVLVQQVVQRLRELGGEAPAEIAGREENIVFSMPKELRIPAVNQS.

A [4Fe-4S] cluster-binding site is contributed by C12. Positions 41 and 74 each coordinate (2E)-4-hydroxy-3-methylbut-2-enyl diphosphate. Positions 41 and 74 each coordinate dimethylallyl diphosphate. Positions 41 and 74 each coordinate isopentenyl diphosphate. A [4Fe-4S] cluster-binding site is contributed by C96. H124 lines the (2E)-4-hydroxy-3-methylbut-2-enyl diphosphate pocket. H124 is a binding site for dimethylallyl diphosphate. Isopentenyl diphosphate is bound at residue H124. Catalysis depends on E126, which acts as the Proton donor. Residue T168 coordinates (2E)-4-hydroxy-3-methylbut-2-enyl diphosphate. C198 contacts [4Fe-4S] cluster. 4 residues coordinate (2E)-4-hydroxy-3-methylbut-2-enyl diphosphate: S226, S227, N228, and S270. Positions 226, 227, 228, and 270 each coordinate dimethylallyl diphosphate. The isopentenyl diphosphate site is built by S226, S227, N228, and S270.

It belongs to the IspH family. The cofactor is [4Fe-4S] cluster.

It carries out the reaction isopentenyl diphosphate + 2 oxidized [2Fe-2S]-[ferredoxin] + H2O = (2E)-4-hydroxy-3-methylbut-2-enyl diphosphate + 2 reduced [2Fe-2S]-[ferredoxin] + 2 H(+). The enzyme catalyses dimethylallyl diphosphate + 2 oxidized [2Fe-2S]-[ferredoxin] + H2O = (2E)-4-hydroxy-3-methylbut-2-enyl diphosphate + 2 reduced [2Fe-2S]-[ferredoxin] + 2 H(+). Its pathway is isoprenoid biosynthesis; dimethylallyl diphosphate biosynthesis; dimethylallyl diphosphate from (2E)-4-hydroxy-3-methylbutenyl diphosphate: step 1/1. It participates in isoprenoid biosynthesis; isopentenyl diphosphate biosynthesis via DXP pathway; isopentenyl diphosphate from 1-deoxy-D-xylulose 5-phosphate: step 6/6. Catalyzes the conversion of 1-hydroxy-2-methyl-2-(E)-butenyl 4-diphosphate (HMBPP) into a mixture of isopentenyl diphosphate (IPP) and dimethylallyl diphosphate (DMAPP). Acts in the terminal step of the DOXP/MEP pathway for isoprenoid precursor biosynthesis. In Hahella chejuensis (strain KCTC 2396), this protein is 4-hydroxy-3-methylbut-2-enyl diphosphate reductase.